The primary structure comprises 122 residues: MIQMQTNLDVADNSGARRVMCIKVLGGSKRKYAGVGDIIVVSVKEAIPRGRVKKGDVMKAVVVRTAKDVKRADGSVIRFDKNAAVLINNQKEPVGTRIFGPVPRELRARNHMKIISLAPEVL.

The protein belongs to the universal ribosomal protein uL14 family. In terms of assembly, part of the 50S ribosomal subunit. Forms a cluster with proteins L3 and L19. In the 70S ribosome, L14 and L19 interact and together make contacts with the 16S rRNA in bridges B5 and B8.

In terms of biological role, binds to 23S rRNA. Forms part of two intersubunit bridges in the 70S ribosome. The chain is Large ribosomal subunit protein uL14 from Methylorubrum populi (strain ATCC BAA-705 / NCIMB 13946 / BJ001) (Methylobacterium populi).